The chain runs to 227 residues: DnaJ homolog subfamily B member 8 (227 aa).

Residues 3–69 form the J domain; the sequence is NYYEVLGVQS…KKRSVYDRAG (67 aa).

Interacts with histone deacetylases HDAC4, HDAC6, and SIRT2, HDAC activity is required for antiaggregation.

Efficient suppressor of aggregation and toxicity of disease-associated polyglutamine proteins. The sequence is that of DnaJ homolog subfamily B member 8 (Dnajb8) from Mus musculus (Mouse).